Reading from the N-terminus, the 379-residue chain is Histidinol-phosphate aminotransferase (379 aa).

At Lys231 the chain carries N6-(pyridoxal phosphate)lysine.

This sequence belongs to the class-II pyridoxal-phosphate-dependent aminotransferase family. Histidinol-phosphate aminotransferase subfamily. In terms of assembly, homodimer. Requires pyridoxal 5'-phosphate as cofactor.

The catalysed reaction is L-histidinol phosphate + 2-oxoglutarate = 3-(imidazol-4-yl)-2-oxopropyl phosphate + L-glutamate. The protein operates within amino-acid biosynthesis; L-histidine biosynthesis; L-histidine from 5-phospho-alpha-D-ribose 1-diphosphate: step 7/9. This Mycolicibacterium smegmatis (strain ATCC 700084 / mc(2)155) (Mycobacterium smegmatis) protein is Histidinol-phosphate aminotransferase.